The chain runs to 1165 residues: Phenyloxazoline synthase MbtB (1165 aa).

One can recognise a Carrier 1 domain in the interval 5–78 (PARSEDIREE…AWAQLVTAGR (74 aa)). Residue S39 is modified to O-(pantetheine 4'-phosphoryl)serine. Residues 77–100 (GRQDTDSAAPPADSSGDPSGETEP) are disordered. A condensation/cyclization region spans residues 97–393 (ETEPFALAPM…SSLLLDVDLV (297 aa)). The segment at 578–973 (SYAQLRDQAL…RVPGVRTAVA (396 aa)) is adenylation. Residues 1055–1131 (AASTPLEGAL…ALAAVLRAAE (77 aa)) form the Carrier 2 domain. At S1090 the chain carries O-(pantetheine 4'-phosphoryl)serine.

Belongs to the ATP-dependent AMP-binding enzyme family. MbtB subfamily. Pantetheine 4'-phosphate is required as a cofactor. In terms of processing, 4'-phosphopantetheine is transferred from CoA to a specific serine in each of the two carrier protein domains, leading to their activation from apo to holo forms.

The protein operates within siderophore biosynthesis; mycobactin biosynthesis. In terms of biological role, involved in the initial steps of the mycobactin biosynthetic pathway. Putatively couples activated salicylic acid with serine or threonine and cyclizes this precursor to the hydroxyphenyloxazoline ring system present in this class of siderophores. The sequence is that of Phenyloxazoline synthase MbtB (mbtB) from Mycolicibacterium paratuberculosis (strain ATCC BAA-968 / K-10) (Mycobacterium paratuberculosis).